The primary structure comprises 145 residues: Putative BCoR-like protein 2 (145 aa).

Positions 1-27 (MKEKLSKKRAEVKGNRSWLEEFLKPSD) are enriched in basic and acidic residues. A disordered region spans residues 1-58 (MKEKLSKKRAEVKGNRSWLEEFLKPSDNEEGPPPKNKVLSNNASSQKPTHSSCIPLLR). Residues 38-52 (VLSNNASSQKPTHSS) are compositionally biased toward polar residues.

The protein belongs to the BCOR family.

The chain is Putative BCoR-like protein 2 (BCORP1) from Homo sapiens (Human).